A 358-amino-acid chain; its full sequence is Trace amine-associated receptor 7a (358 aa).

Topologically, residues 1-47 are extracellular; it reads MDKLVDHFLSDQSRTMNEDLFSATSTELCYENLNRSCVRSPYSPGPR. Residue Asn-34 is glycosylated (N-linked (GlcNAc...) asparagine). 2 disulfides stabilise this stretch: Cys-37–Cys-201 and Cys-120–Cys-205. Residues 48–68 form a helical membrane-spanning segment; that stretch reads LILYAVFGFGAALAVCGNLLV. Over 69–83 the chain is Cytoplasmic; sequence MTSILHFRQLHSPAN. A helical transmembrane segment spans residues 84-104; it reads FLVASLACADFLVGLTVMPFS. The Extracellular portion of the chain corresponds to 105–121; it reads TVRSVEGCWYFGESYCK. Residues 122 to 143 form a helical membrane-spanning segment; it reads FHSCFEGSFCYSSIFHLCFISV. Residues 144-166 are Cytoplasmic-facing; the sequence is DRYIAVSDPLTYPTRFTASVSGK. A helical transmembrane segment spans residues 167-187; sequence CITFSWLLSIIYSFSLLYTGA. Residues 188–212 are Extracellular-facing; sequence NEAGLEDLVSVLTCVGGCQIAVNQS. N-linked (GlcNAc...) asparagine glycosylation occurs at Asn-210. A helical membrane pass occupies residues 213–233; sequence WVFINFLLFLIPTLVMMTVYS. Residues 234-274 lie on the Cytoplasmic side of the membrane; the sequence is KIFLIAKQQAQNIEKMSKQTARASESYKDRVAKRERKAAKT. Residues 275-295 traverse the membrane as a helical segment; sequence LGIAVAAFLLSWLPYFIDSII. At 296–309 the chain is on the extracellular side; sequence DAFLGFITPTYVYE. A helical membrane pass occupies residues 310–333; the sequence is ILVWIAYYNSAMNPLIYAFFYPWF. At 334–358 the chain is on the cytoplasmic side; it reads RKAIKLIVTGKILRENSSTTNLFPE.

The protein belongs to the G-protein coupled receptor 1 family. As to expression, specifically expressed in neurons of the olfactory epithelium.

It localises to the cell membrane. Its function is as follows. Olfactory receptor specific for N,N-dimethylalkylamines trace amines. Trace amine compounds are enriched in animal body fluids and act on trace amine-associated receptors (TAARs) to elicit both intraspecific and interspecific innate behaviors. Ligand-binding causes a conformation change that triggers signaling via G(s)-class of G alpha proteins (GNAL or GNAS). The sequence is that of Trace amine-associated receptor 7a from Mus musculus (Mouse).